The chain runs to 853 residues: Transcription factor CPH2 (853 aa).

2 disordered regions span residues 165-209 (EPPI…DKNS) and 296-353 (NMNP…VHHP). The span at 180 to 194 (TTTVSSTNSITNTTK) shows a compositional bias: low complexity. Residues 205–274 (KDKNSHNMIE…TKATEYIKHL (70 aa)) form the bHLH domain. Residues 301 to 315 (SLPPPPQQMQAPPQP) show a composition bias toward pro residues. The span at 330–352 (TPASQYPSPQQQVSPTQQQTVHH) shows a compositional bias: low complexity.

It is found in the nucleus. Functionally, transcription factor that positively controls filamentous growth, virulence, and invasiveness. Binds directly to the two SRE-1-like elements upstream of TEC1 and thus positively regulates expression of this important hyphal growth regulator. Functions independently of known signaling cascades involving EFG1. Also regulates gene expression during intestinal colonization but is not involved in host cell adhesion. This Candida albicans (strain SC5314 / ATCC MYA-2876) (Yeast) protein is Transcription factor CPH2 (CPH2).